A 196-amino-acid chain; its full sequence is Ribonuclease HII (196 aa).

Positions 9–196 (GLVCGIDEAG…GPVARQLSLL (188 aa)) constitute an RNase H type-2 domain. The a divalent metal cation site is built by Asp15, Glu16, and Asp107.

It belongs to the RNase HII family. The cofactor is Mn(2+). It depends on Mg(2+) as a cofactor.

The protein localises to the cytoplasm. It catalyses the reaction Endonucleolytic cleavage to 5'-phosphomonoester.. Functionally, endonuclease that specifically degrades the RNA of RNA-DNA hybrids. The polypeptide is Ribonuclease HII (Dechloromonas aromatica (strain RCB)).